A 650-amino-acid chain; its full sequence is MGKIIGIDLGTTNSCVAIMEGNQVKVIENSEGARTTPSIIAYMDDNEVLVGAPAKRQSVTNPKNTLFAVKRLIGRRFEEKEVQKDIGLMPYSIIKADNGDAWVEAHGEKLAPPQVSAEVLRKMKKTAEDYLGEPVTEAVITVPAYFNDSQRQATKDAGRIAGLEVKRIINEPTAAALAFGLDKAEKGDRKIAVYDLGGGTFDVSIIEIADVDGEKQFEVLSTNGDTFLGGEDFDQRIIDYIIGEFKKEQGVDLSKDVLALQRLKEAAEKAKIELSSGQQTEINLPYITADASGPKHLNLKITRAKLEALVEDLVERTIEPCRIAIKDAGVKVSDIDDVILVGGQTRMPKVMEKVKEFFGKDPRRDVNPDEAVAVGAAIQGQVLSGDRKDVLLLDVTPLSLGIETLGGVMTKMINKNTTIPTKHSQVYSTADDNQGAVTIKVFQGEREMAAGNKLLGEFNLEGIPPAPRGVPQIEVTFDIDANGILHVGAKDKATGKENKITIKANSGLSEAEIEKMVKDAEANAAEDHKLRELAESRNQGDALVHSTKKALTEYGDKLEAGEKEKIEAALKELEDVLKNASSDKAAIDAKIETVATASQKLGEKMYADMQAQQAGAAGAAGAAAAEGAAQGGAQTADDVVDADFKEVKKD.

Thr-200 bears the Phosphothreonine; by autocatalysis mark. Residues 613 to 634 (QAGAAGAAGAAAAEGAAQGGAQ) are compositionally biased toward low complexity. The disordered stretch occupies residues 613–637 (QAGAAGAAGAAAAEGAAQGGAQTAD).

The protein belongs to the heat shock protein 70 family.

Acts as a chaperone. In Burkholderia thailandensis (strain ATCC 700388 / DSM 13276 / CCUG 48851 / CIP 106301 / E264), this protein is Chaperone protein DnaK.